The chain runs to 253 residues: Decarboxylase DEC1 (253 aa).

K121 (schiff-base intermediate with acetoacetate) is an active-site residue.

It belongs to the ADC family.

The protein operates within mycotoxin biosynthesis. Its function is as follows. Decarboxylase; part of the Tox1B locus, one of the 2 loci that mediate the biosynthesis of T-toxin, a family of linear polyketides 37 to 45 carbons in length, of which the major component is 41 carbons, and which leads to high virulence to maize. One of the PKSs (PKS1 or PKS2) could synthesize a precursor, used subsequently by the other PKS as starter unit, to add additional carbons. Variability in the length of the final carbon backbone C35-47 could be achieved by varying the number of condensation cycles, or use of different starter or extender units or might be due to decarboxylation of the penultimate product, catalyzed by DEC1. Additional proteins are required for the biosynthesis of T-toxin, including oxidoreductases RED1, RED2, RED3, LAM1 and OXI1, as well as esterase TOX9. The polypeptide is Decarboxylase DEC1 (Cochliobolus heterostrophus (strain C4 / ATCC 48331 / race T) (Southern corn leaf blight fungus)).